The following is a 316-amino-acid chain: GTP cyclohydrolase FolE2 1 (316 aa).

It belongs to the GTP cyclohydrolase IV family.

It carries out the reaction GTP + H2O = 7,8-dihydroneopterin 3'-triphosphate + formate + H(+). The protein operates within cofactor biosynthesis; 7,8-dihydroneopterin triphosphate biosynthesis; 7,8-dihydroneopterin triphosphate from GTP: step 1/1. In terms of biological role, converts GTP to 7,8-dihydroneopterin triphosphate. This chain is GTP cyclohydrolase FolE2 1, found in Burkholderia lata (strain ATCC 17760 / DSM 23089 / LMG 22485 / NCIMB 9086 / R18194 / 383).